The primary structure comprises 701 residues: Polyribonucleotide nucleotidyltransferase (701 aa).

Mg(2+)-binding residues include D487 and D493. The KH domain maps to 554-613; the sequence is PTMIAMKIDTDKIRDVIGKGGATIRAICEETKASIDIEDDGSIKIFGETKEAAEAARQRV. In terms of domain architecture, S1 motif spans 623–691; that stretch reads GKIYVGKVER…NRGRIKLSIK (69 aa).

This sequence belongs to the polyribonucleotide nucleotidyltransferase family. Component of the RNA degradosome, which is a multiprotein complex involved in RNA processing and mRNA degradation. Mg(2+) serves as cofactor.

The protein localises to the cytoplasm. The enzyme catalyses RNA(n+1) + phosphate = RNA(n) + a ribonucleoside 5'-diphosphate. Functionally, involved in mRNA degradation. Catalyzes the phosphorolysis of single-stranded polyribonucleotides processively in the 3'- to 5'-direction. The protein is Polyribonucleotide nucleotidyltransferase of Pseudomonas fluorescens (strain SBW25).